The primary structure comprises 137 residues: Nucleoside diphosphate kinase (137 aa).

ATP is bound by residues lysine 10, phenylalanine 59, arginine 87, threonine 93, arginine 104, and asparagine 114. Catalysis depends on histidine 117, which acts as the Pros-phosphohistidine intermediate.

The protein belongs to the NDK family. As to quaternary structure, homotetramer. Mg(2+) serves as cofactor.

It is found in the cytoplasm. The enzyme catalyses a 2'-deoxyribonucleoside 5'-diphosphate + ATP = a 2'-deoxyribonucleoside 5'-triphosphate + ADP. It catalyses the reaction a ribonucleoside 5'-diphosphate + ATP = a ribonucleoside 5'-triphosphate + ADP. Its function is as follows. Major role in the synthesis of nucleoside triphosphates other than ATP. The ATP gamma phosphate is transferred to the NDP beta phosphate via a ping-pong mechanism, using a phosphorylated active-site intermediate. This Streptomyces avermitilis (strain ATCC 31267 / DSM 46492 / JCM 5070 / NBRC 14893 / NCIMB 12804 / NRRL 8165 / MA-4680) protein is Nucleoside diphosphate kinase.